A 314-amino-acid polypeptide reads, in one-letter code: tRNA-cytidine(32) 2-sulfurtransferase (314 aa).

The PP-loop motif motif lies at 49 to 54; sequence SGGKDS. Cys124, Cys127, and Cys215 together coordinate [4Fe-4S] cluster.

It belongs to the TtcA family. In terms of assembly, homodimer. It depends on Mg(2+) as a cofactor. Requires [4Fe-4S] cluster as cofactor.

It localises to the cytoplasm. The catalysed reaction is cytidine(32) in tRNA + S-sulfanyl-L-cysteinyl-[cysteine desulfurase] + AH2 + ATP = 2-thiocytidine(32) in tRNA + L-cysteinyl-[cysteine desulfurase] + A + AMP + diphosphate + H(+). The protein operates within tRNA modification. In terms of biological role, catalyzes the ATP-dependent 2-thiolation of cytidine in position 32 of tRNA, to form 2-thiocytidine (s(2)C32). The sulfur atoms are provided by the cysteine/cysteine desulfurase (IscS) system. This is tRNA-cytidine(32) 2-sulfurtransferase from Pasteurella multocida (strain Pm70).